Reading from the N-terminus, the 256-residue chain is Acetyl-coenzyme A carboxylase carboxyl transferase subunit alpha (256 aa).

The 236-residue stretch at Met-1–Glu-236 folds into the CoA carboxyltransferase C-terminal domain.

Belongs to the AccA family. As to quaternary structure, acetyl-CoA carboxylase is a heterohexamer composed of biotin carboxyl carrier protein (AccB), biotin carboxylase (AccC) and two subunits each of ACCase subunit alpha (AccA) and ACCase subunit beta (AccD).

Its subcellular location is the cytoplasm. The catalysed reaction is N(6)-carboxybiotinyl-L-lysyl-[protein] + acetyl-CoA = N(6)-biotinyl-L-lysyl-[protein] + malonyl-CoA. The protein operates within lipid metabolism; malonyl-CoA biosynthesis; malonyl-CoA from acetyl-CoA: step 1/1. Functionally, component of the acetyl coenzyme A carboxylase (ACC) complex. First, biotin carboxylase catalyzes the carboxylation of biotin on its carrier protein (BCCP) and then the CO(2) group is transferred by the carboxyltransferase to acetyl-CoA to form malonyl-CoA. The polypeptide is Acetyl-coenzyme A carboxylase carboxyl transferase subunit alpha (Streptococcus thermophilus (strain ATCC BAA-250 / LMG 18311)).